Reading from the N-terminus, the 407-residue chain is Dual-specificity RNA methyltransferase RlmN (407 aa).

The active-site Proton acceptor is the Glu-136. The region spanning 144–378 (REDRGAVCIS…MDAGFASPIR (235 aa)) is the Radical SAM core domain. Cys-151 and Cys-389 are disulfide-bonded. 3 residues coordinate [4Fe-4S] cluster: Cys-158, Cys-162, and Cys-165. S-adenosyl-L-methionine contacts are provided by residues 215–216 (GE), Ser-247, 269–271 (SLH), and Asn-346. Cys-389 (S-methylcysteine intermediate) is an active-site residue.

This sequence belongs to the radical SAM superfamily. RlmN family. [4Fe-4S] cluster serves as cofactor.

Its subcellular location is the cytoplasm. It catalyses the reaction adenosine(2503) in 23S rRNA + 2 reduced [2Fe-2S]-[ferredoxin] + 2 S-adenosyl-L-methionine = 2-methyladenosine(2503) in 23S rRNA + 5'-deoxyadenosine + L-methionine + 2 oxidized [2Fe-2S]-[ferredoxin] + S-adenosyl-L-homocysteine. The enzyme catalyses adenosine(37) in tRNA + 2 reduced [2Fe-2S]-[ferredoxin] + 2 S-adenosyl-L-methionine = 2-methyladenosine(37) in tRNA + 5'-deoxyadenosine + L-methionine + 2 oxidized [2Fe-2S]-[ferredoxin] + S-adenosyl-L-homocysteine. Specifically methylates position 2 of adenine 2503 in 23S rRNA and position 2 of adenine 37 in tRNAs. m2A2503 modification seems to play a crucial role in the proofreading step occurring at the peptidyl transferase center and thus would serve to optimize ribosomal fidelity. The protein is Dual-specificity RNA methyltransferase RlmN of Gluconobacter oxydans (strain 621H) (Gluconobacter suboxydans).